The primary structure comprises 132 residues: uncharacterized protein (132 aa).

The region spanning 45–115 (VHMEKHKLKI…VVIVTTAEGK (71 aa)) is the BIG2 domain.

The protein to B.anthracis BA1245.

This is an uncharacterized protein from Bacillus cereus (strain ATCC 14579 / DSM 31 / CCUG 7414 / JCM 2152 / NBRC 15305 / NCIMB 9373 / NCTC 2599 / NRRL B-3711).